Here is a 316-residue protein sequence, read N- to C-terminus: Protein U25 (316 aa).

This sequence belongs to the herpesviridae US22 family.

This chain is Protein U25 (U25), found in Homo sapiens (Human).